We begin with the raw amino-acid sequence, 215 residues long: MEVVILNENGDSVGNLEIVDEIFKSEVNNNLLYEAIKNELANRRQGTHSTKTRAEVSGGGKKPWRQKGTGRARAGSTRSPIWVGGGKTHTPKPRDYSYRLPKKMKRKALLSVLSLKYGSNVLKVFEDFTFDAPKTKRMASFISKVKEPNTRKVAFVVGKDESLGDNYNKLLLSLRNIKDLKLVNADSMSIHPLFYADEVYFTKTALSKLNARIKG.

Residues 43–97 are disordered; the sequence is RRQGTHSTKTRAEVSGGGKKPWRQKGTGRARAGSTRSPIWVGGGKTHTPKPRDYS.

Belongs to the universal ribosomal protein uL4 family. As to quaternary structure, part of the 50S ribosomal subunit.

In terms of biological role, one of the primary rRNA binding proteins, this protein initially binds near the 5'-end of the 23S rRNA. It is important during the early stages of 50S assembly. It makes multiple contacts with different domains of the 23S rRNA in the assembled 50S subunit and ribosome. Forms part of the polypeptide exit tunnel. The sequence is that of Large ribosomal subunit protein uL4 from Brachyspira hyodysenteriae (strain ATCC 49526 / WA1).